The following is a 226-amino-acid chain: ATP-dependent dethiobiotin synthetase BioD (226 aa).

Residue 12 to 17 (GVGKTV) participates in ATP binding. Threonine 16 lines the Mg(2+) pocket. Lysine 37 is an active-site residue. Threonine 41 serves as a coordination point for substrate. ATP-binding positions include aspartate 49, 108–111 (EGAG), and 197–199 (PAG). Residues aspartate 49 and glutamate 108 each contribute to the Mg(2+) site.

The protein belongs to the dethiobiotin synthetase family. As to quaternary structure, homodimer. The cofactor is Mg(2+).

The protein resides in the cytoplasm. It carries out the reaction (7R,8S)-7,8-diammoniononanoate + CO2 + ATP = (4R,5S)-dethiobiotin + ADP + phosphate + 3 H(+). It participates in cofactor biosynthesis; biotin biosynthesis; biotin from 7,8-diaminononanoate: step 1/2. Catalyzes a mechanistically unusual reaction, the ATP-dependent insertion of CO2 between the N7 and N8 nitrogen atoms of 7,8-diaminopelargonic acid (DAPA, also called 7,8-diammoniononanoate) to form a ureido ring. The polypeptide is ATP-dependent dethiobiotin synthetase BioD (Mycobacterium avium (strain 104)).